Here is a 277-residue protein sequence, read N- to C-terminus: Ribosomally synthesized cyclic peptide asperipin-2a precursor aprA (277 aa).

The first 19 residues, methionine 1–alanine 19, serve as a signal peptide directing secretion. 12 consecutive propeptides follow at residues leucine 20–arginine 69, lysine 76–arginine 88, lysine 95–arginine 107, lysine 114–arginine 126, lysine 133–arginine 145, lysine 152–arginine 164, lysine 171–arginine 183, lysine 190–arginine 202, lysine 209–arginine 221, lysine 228–arginine 240, lysine 247–arginine 259, and lysine 266–lysine 277.

Post-translationally, aprA is processed by kexin proteases to produce 11 identical copies of the hexapeptide Phe-Tyr-Tyr-Thr-Gly-Tyr, that is further modified aprY and aprR to yield asperipin-2a. The bicyclic structure of asperipin-2a is likely synthesized by the single ustYa family oxidase aprY. The reductase aprR may be required for the final reduction to yield asperipin-2a.

The protein operates within secondary metabolite biosynthesis. Ribosomally synthesized cyclic peptide asperipin-2a precursor; part of the gene cluster that mediates the biosynthesis of the asperipin-2a, a bicyclic peptide that possesses two macrocyclic ether rings consisting of 14- and 17-membered paracyclophans. The aprA translated product contains a 11-fold repeated peptide embedding the hexapeptide Phe-Tyr-Tyr-Thr-Gly-Tyr, that is converted into asperipin-2a. After being excised from the precursor peptide by kexin proteases, the core peptides are cyclized and modified post-translationally by enzymes encoded within the corresponding gene cluster. This chain is Ribosomally synthesized cyclic peptide asperipin-2a precursor aprA, found in Aspergillus flavus (strain ATCC 200026 / FGSC A1120 / IAM 13836 / NRRL 3357 / JCM 12722 / SRRC 167).